A 45-amino-acid polypeptide reads, in one-letter code: Pseudo-hevein (45 aa).

A Chitin-binding type-1 domain is found at 1–43; it reads EQCGRQAGGKLCPNNLCCSQYGWCGSSDDYCSPSKNCQSNCKG. 4 disulfides stabilise this stretch: Cys3/Cys18, Cys12/Cys24, Cys17/Cys31, and Cys37/Cys41.

Functionally, N-acetyl-D-glucosamine / N-acetyl-D-neuraminic acid binding lectin. Can inhibit fungal growth. The chain is Pseudo-hevein from Hevea brasiliensis (Para rubber tree).